We begin with the raw amino-acid sequence, 545 residues long: Cytochrome P450 10 (545 aa).

Cys-493 is a heme binding site.

It belongs to the cytochrome P450 family. Heme is required as a cofactor. As to expression, abundantly expressed in the female gonadotropic hormone producing dorsal bodies.

Its function is as follows. May be involved in the synthesis of the female gonadotropic hormone produced by the dorsal bodies. The chain is Cytochrome P450 10 (CYP10) from Lymnaea stagnalis (Great pond snail).